The following is a 172-amino-acid chain: RNA pyrophosphohydrolase (172 aa).

The Nudix hydrolase domain maps to 6 to 149; that stretch reads GYRLNVGIVI…KRDVYRRAMK (144 aa). A Nudix box motif is present at residues 38–59; that stretch reads GGIDDGESPEQAMFRELYEEVG.

The protein belongs to the Nudix hydrolase family. RppH subfamily. A divalent metal cation is required as a cofactor.

Its function is as follows. Accelerates the degradation of transcripts by removing pyrophosphate from the 5'-end of triphosphorylated RNA, leading to a more labile monophosphorylated state that can stimulate subsequent ribonuclease cleavage. In Vibrio cholerae serotype O1 (strain ATCC 39315 / El Tor Inaba N16961), this protein is RNA pyrophosphohydrolase.